Here is a 332-residue protein sequence, read N- to C-terminus: Ephrin-B2a (332 aa).

The first 24 residues, 1-24, serve as a signal peptide directing secretion; sequence MGDSLWRYYFGVLVIACKVNLSRA. N20 and N33 each carry an N-linked (GlcNAc...) asparagine glycan. An Ephrin RBD domain is found at 25 to 161; that stretch reads LILDSIYWNT…TKSMKIIMKV (137 aa). Residues 25 to 225 are Extracellular-facing; it reads LILDSIYWNT…VIGSEVALFA (201 aa). 2 cysteine pairs are disulfide-bonded: C59–C98 and C86–C150. N136 carries an N-linked (GlcNAc...) asparagine glycan. Residues 162 to 212 form a disordered region; that stretch reads GQNPSDPISPKDYPTSYPPKHPDLGGKDSKSNEVLKPDASPHGEDKGDGNK. Residues 181–210 show a composition bias toward basic and acidic residues; sequence KHPDLGGKDSKSNEVLKPDASPHGEDKGDG. N211 is a glycosylation site (N-linked (GlcNAc...) asparagine). The helical transmembrane segment at 226 to 246 threads the bilayer; sequence CIASASVIVIIIIIMLVFLLL. Residues 247–332 are Cytoplasmic-facing; it reads KYRRRHRKHS…QSPANIYYKV (86 aa). Positions 255 to 285 are disordered; the sequence is HSPQHATTLSLSTLATPKRGGSGGNNNGSEP. Residues 260–270 show a composition bias toward low complexity; that stretch reads ATTLSLSTLAT. The PDZ-binding motif lies at 330–332; it reads YKV.

Belongs to the ephrin family. In terms of assembly, binds to the receptor tyrosine kinase ephb4. Inducible phosphorylation of tyrosine residues in the cytoplasmic domain.

It is found in the cell membrane. Its function is as follows. Cell surface transmembrane ligand for Eph receptors, a family of receptor tyrosine kinases which are crucial for migration, repulsion and adhesion during neuronal, vascular and epithelial development. Binds promiscuously Eph receptors residing on adjacent cells, leading to contact-dependent bidirectional signaling into neighboring cells. The signaling pathway downstream of the receptor is referred to as forward signaling while the signaling pathway downstream of the ephrin ligand is referred to as reverse signaling. Together with ephb4 may play a central role in heart morphogenesis and angiogenesis through regulation of cell adhesion and cell migration. The protein is Ephrin-B2a (efnb2a) of Danio rerio (Zebrafish).